Consider the following 249-residue polypeptide: L-fucose operon activator (249 aa).

The 56-residue stretch at 1-56 (MNYRDELILQWVNQQGKASVIELAQHCDISVETIRRDLNKLANKGLLHRTHGGAVS) folds into the HTH deoR-type domain. A DNA-binding region (H-T-H motif) is located at residues 18–37 (ASVIELAQHCDISVETIRRD).

Transcriptional activator of the fuc operon. This Haemophilus influenzae (strain ATCC 51907 / DSM 11121 / KW20 / Rd) protein is L-fucose operon activator (fucR).